Here is a 1240-residue protein sequence, read N- to C-terminus: DNA-directed RNA polymerase subunit beta (1240 aa).

The protein belongs to the RNA polymerase beta chain family. The RNAP catalytic core consists of 2 alpha, 1 beta, 1 beta' and 1 omega subunit. When a sigma factor is associated with the core the holoenzyme is formed, which can initiate transcription.

It carries out the reaction RNA(n) + a ribonucleoside 5'-triphosphate = RNA(n+1) + diphosphate. Functionally, DNA-dependent RNA polymerase catalyzes the transcription of DNA into RNA using the four ribonucleoside triphosphates as substrates. The sequence is that of DNA-directed RNA polymerase subunit beta from Phytoplasma australiense.